We begin with the raw amino-acid sequence, 88 residues long: Small ribosomal subunit protein uS17 (88 aa).

The protein belongs to the universal ribosomal protein uS17 family. As to quaternary structure, part of the 30S ribosomal subunit.

Functionally, one of the primary rRNA binding proteins, it binds specifically to the 5'-end of 16S ribosomal RNA. The polypeptide is Small ribosomal subunit protein uS17 (Ligilactobacillus salivarius (strain UCC118) (Lactobacillus salivarius)).